The following is a 257-amino-acid chain: Small ribosomal subunit protein uS2 (257 aa).

It belongs to the universal ribosomal protein uS2 family.

This is Small ribosomal subunit protein uS2 from Bartonella quintana (strain Toulouse) (Rochalimaea quintana).